Here is a 631-residue protein sequence, read N- to C-terminus: Translation factor GUF1, mitochondrial (631 aa).

The transit peptide at 1-19 (MFNRRLLRHVRYAFQQVRS) directs the protein to the mitochondrion. A tr-type G domain is found at 33-214 (ERYRNFSIVA…AIVDRIPPPT (182 aa)). Residues 42 to 49 (AHVDHGKS), 107 to 111 (DTPGH), and 161 to 164 (NKID) each bind GTP.

The protein belongs to the TRAFAC class translation factor GTPase superfamily. Classic translation factor GTPase family. LepA subfamily.

Its subcellular location is the mitochondrion inner membrane. It carries out the reaction GTP + H2O = GDP + phosphate + H(+). In terms of biological role, promotes mitochondrial protein synthesis. May act as a fidelity factor of the translation reaction, by catalyzing a one-codon backward translocation of tRNAs on improperly translocated ribosomes. Binds to mitochondrial ribosomes in a GTP-dependent manner. In Kluyveromyces lactis (strain ATCC 8585 / CBS 2359 / DSM 70799 / NBRC 1267 / NRRL Y-1140 / WM37) (Yeast), this protein is Translation factor GUF1, mitochondrial.